The sequence spans 274 residues: N-acetylmuramic acid 6-phosphate etherase (274 aa).

Residues 52–215 (IVPRMEQGGR…STSIMIRLGR (164 aa)) enclose the SIS domain. Residue glutamate 80 is the Proton donor of the active site. Glutamate 111 is a catalytic residue.

It belongs to the GCKR-like family. MurNAc-6-P etherase subfamily. In terms of assembly, homodimer.

The enzyme catalyses N-acetyl-D-muramate 6-phosphate + H2O = N-acetyl-D-glucosamine 6-phosphate + (R)-lactate. The protein operates within amino-sugar metabolism; N-acetylmuramate degradation. In terms of biological role, specifically catalyzes the cleavage of the D-lactyl ether substituent of MurNAc 6-phosphate, producing GlcNAc 6-phosphate and D-lactate. The chain is N-acetylmuramic acid 6-phosphate etherase from Porphyromonas gingivalis (strain ATCC 33277 / DSM 20709 / CIP 103683 / JCM 12257 / NCTC 11834 / 2561).